The chain runs to 107 residues: Phosphoribosyl-ATP pyrophosphatase (107 aa).

Belongs to the PRA-PH family.

It is found in the cytoplasm. The enzyme catalyses 1-(5-phospho-beta-D-ribosyl)-ATP + H2O = 1-(5-phospho-beta-D-ribosyl)-5'-AMP + diphosphate + H(+). It functions in the pathway amino-acid biosynthesis; L-histidine biosynthesis; L-histidine from 5-phospho-alpha-D-ribose 1-diphosphate: step 2/9. This chain is Phosphoribosyl-ATP pyrophosphatase, found in Methylobacterium nodulans (strain LMG 21967 / CNCM I-2342 / ORS 2060).